Reading from the N-terminus, the 475-residue chain is Ankyrin repeat, SAM and basic leucine zipper domain-containing protein 1 (475 aa).

Serine 17, serine 18, and serine 20 each carry phosphoserine. ANK repeat units follow at residues 45–74 (EKNETFKKALTTGDISLVQELLDSGISVES), 78–107 (YGWTPLMYAASVSNVELVRVLLDRGANASF), 110–144 (DKQTILITACSARGSEEQILKCVELLLSRNADPNV), 148–177 (RLMTPIMYAARDGHPQVVALLVAHGAEVNS), 181–210 (NGYTALTWAARQGHKNVVLKLLELGANKML), and 214–243 (DGKTPSEIAKRNKHLEIFNFLSLTLNPLEG). The SAM domain maps to 272–334 (SYTAFGDLEI…KILAALKELE (63 aa)).

In terms of assembly, interacts with DDX4, PIWIL1, RANBP9 and TDRD1.

The protein localises to the cytoplasm. Its function is as follows. Plays a central role during spermatogenesis by repressing transposable elements and preventing their mobilization, which is essential for the germline integrity. Acts via the piRNA metabolic process, which mediates the repression of transposable elements during meiosis by forming complexes composed of piRNAs and Piwi proteins and governs the methylation and subsequent repression of transposons. Its association with pi-bodies suggests a participation in the primary piRNAs metabolic process. Required prior to the pachytene stage to facilitate the production of multiple types of piRNAs, including those associated with repeats involved in the regulation of retrotransposons. May act by mediating protein-protein interactions during germ cell maturation. The chain is Ankyrin repeat, SAM and basic leucine zipper domain-containing protein 1 (ASZ1) from Mustela putorius furo (European domestic ferret).